Here is a 336-residue protein sequence, read N- to C-terminus: GTP 3',8-cyclase (336 aa).

Residues 16-241 (AYRRTYYYLR…QSKGITDGPA (226 aa)) form the Radical SAM core domain. Arginine 25 provides a ligand contact to GTP. 2 residues coordinate [4Fe-4S] cluster: cysteine 32 and cysteine 36. Residue tyrosine 38 participates in S-adenosyl-L-methionine binding. Cysteine 39 is a [4Fe-4S] cluster binding site. Residue arginine 75 coordinates GTP. Glycine 79 contributes to the S-adenosyl-L-methionine binding site. A GTP-binding site is contributed by threonine 106. Serine 130 lines the S-adenosyl-L-methionine pocket. Residue lysine 167 coordinates GTP. Methionine 201 is an S-adenosyl-L-methionine binding site. [4Fe-4S] cluster contacts are provided by cysteine 264 and cysteine 267. 269–271 (RLR) serves as a coordination point for GTP. A [4Fe-4S] cluster-binding site is contributed by cysteine 281.

It belongs to the radical SAM superfamily. MoaA family. Monomer and homodimer. Requires [4Fe-4S] cluster as cofactor.

It carries out the reaction GTP + AH2 + S-adenosyl-L-methionine = (8S)-3',8-cyclo-7,8-dihydroguanosine 5'-triphosphate + 5'-deoxyadenosine + L-methionine + A + H(+). It functions in the pathway cofactor biosynthesis; molybdopterin biosynthesis. Catalyzes the cyclization of GTP to (8S)-3',8-cyclo-7,8-dihydroguanosine 5'-triphosphate. This chain is GTP 3',8-cyclase, found in Actinobacillus succinogenes (strain ATCC 55618 / DSM 22257 / CCUG 43843 / 130Z).